We begin with the raw amino-acid sequence, 164 residues long: V-type proton ATPase subunit c' (164 aa).

The Lumenal portion of the chain corresponds to 1–16; that stretch reads MDMVASDNVYAPLYAP. A helical transmembrane segment spans residues 17 to 37; that stretch reads FFGFAGCALAMILSCLGAAIG. At 38–59 the chain is on the cytoplasmic side; it reads TAKSGIGIAGIGTFKPELIMKS. Residues 60 to 80 form a helical membrane-spanning segment; sequence LIPVVMSGILAIYGLVVAVLI. At 81–98 the chain is on the lumenal side; sequence AGNLSPTEEYTLFNGFMH. A helical membrane pass occupies residues 99 to 119; the sequence is LSCGLCVGFACLSSGYAIGIV. Residues 120–136 are Cytoplasmic-facing; sequence GDVGVRKYMHQPRLFVG. A helical transmembrane segment spans residues 137–157; it reads IVLILIFSEVLGLYGMIIALI. Topologically, residues 158 to 164 are lumenal; that stretch reads LNTKGSE.

This sequence belongs to the V-ATPase proteolipid subunit family. V-ATPase is a heteromultimeric enzyme composed of a peripheral catalytic V1 complex (components A to H) attached to an integral membrane V0 proton pore complex (components: a, c, c', c'', d, e, f and VOA1). The decameric c-ring forms the proton-conducting pore, and is composed of eight proteolipid subunits c, one subunit c' and one subunit c''.

The protein localises to the vacuole membrane. Functionally, proton-conducting pore forming subunit of the V0 complex of vacuolar(H+)-ATPase (V-ATPase), a multisubunit enzyme composed of a peripheral complex (V1) that hydrolyzes ATP and a membrane integral complex (V0) that translocates protons. V-ATPase is responsible for acidifying and maintaining the pH of intracellular compartments. The chain is V-type proton ATPase subunit c' (VMA11) from Candida glabrata (strain ATCC 2001 / BCRC 20586 / JCM 3761 / NBRC 0622 / NRRL Y-65 / CBS 138) (Yeast).